A 224-amino-acid polypeptide reads, in one-letter code: Cytidylate kinase (224 aa).

11 to 19 contributes to the ATP binding site; sequence GPAGAGKST.

Belongs to the cytidylate kinase family. Type 1 subfamily.

Its subcellular location is the cytoplasm. The catalysed reaction is CMP + ATP = CDP + ADP. It carries out the reaction dCMP + ATP = dCDP + ADP. The chain is Cytidylate kinase from Lysinibacillus sphaericus (strain C3-41).